The following is a 284-amino-acid chain: Tropomyosin alpha-1 chain (284 aa).

The disordered stretch occupies residues 1 to 38 (MDAIKKKMQMLKLDKENALDRAEQAEADKKGAEDKSKQ). Residues 1 to 284 (MDAIKKKMQM…DHALNDMTSI (284 aa)) are a coiled coil. Basic and acidic residues predominate over residues 12 to 38 (KLDKENALDRAEQAEADKKGAEDKSKQ).

The protein belongs to the tropomyosin family. Homodimer. Heterodimer of an alpha (TPM1, TPM3 or TPM4) and a beta (TPM2) chain.

It is found in the cytoplasm. Its subcellular location is the cytoskeleton. Functionally, binds to actin filaments in muscle and non-muscle cells. Plays a central role, in association with the troponin complex, in the calcium dependent regulation of vertebrate striated muscle contraction. Smooth muscle contraction is regulated by interaction with caldesmon. In non-muscle cells is implicated in stabilizing cytoskeleton actin filaments. This Xenopus laevis (African clawed frog) protein is Tropomyosin alpha-1 chain (tpm1).